We begin with the raw amino-acid sequence, 182 residues long: Ferredoxin-thioredoxin reductase subunit A1, chloroplastic (182 aa).

The transit peptide at M1–N81 directs the protein to the chloroplast.

This sequence belongs to the ferredoxin thioredoxin reductase alpha subunit family. As to quaternary structure, heterodimer of subunit A (variable subunit) and subunit B (catalytic subunit). Heterodimeric FTR forms a complex with ferredoxin and thioredoxin.

It is found in the plastid. The protein localises to the chloroplast. Variable subunit of the ferredoxin-thioredoxin reductase (FTR), which catalyzes the two-electron reduction of thioredoxins by the electrons provided by reduced ferredoxin. The chain is Ferredoxin-thioredoxin reductase subunit A1, chloroplastic from Arabidopsis thaliana (Mouse-ear cress).